The following is a 635-amino-acid chain: Threonine--tRNA ligase (635 aa).

The TGS domain maps to M1–T58. Positions D237 to P528 are catalytic. Positions 328, 379, and 505 each coordinate Zn(2+).

Belongs to the class-II aminoacyl-tRNA synthetase family. As to quaternary structure, homodimer. The cofactor is Zn(2+).

It is found in the cytoplasm. The enzyme catalyses tRNA(Thr) + L-threonine + ATP = L-threonyl-tRNA(Thr) + AMP + diphosphate + H(+). Functionally, catalyzes the attachment of threonine to tRNA(Thr) in a two-step reaction: L-threonine is first activated by ATP to form Thr-AMP and then transferred to the acceptor end of tRNA(Thr). Also edits incorrectly charged L-seryl-tRNA(Thr). This Chlamydia pneumoniae (Chlamydophila pneumoniae) protein is Threonine--tRNA ligase.